Here is a 168-residue protein sequence, read N- to C-terminus: ATP synthase subunit b (168 aa).

The helical transmembrane segment at 10 to 30 (STILGNFILVTASFAVLIILI) threads the bilayer.

The protein belongs to the ATPase B chain family. As to quaternary structure, F-type ATPases have 2 components, F(1) - the catalytic core - and F(0) - the membrane proton channel. F(1) has five subunits: alpha(3), beta(3), gamma(1), delta(1), epsilon(1). F(0) has three main subunits: a(1), b(2) and c(10-14). The alpha and beta chains form an alternating ring which encloses part of the gamma chain. F(1) is attached to F(0) by a central stalk formed by the gamma and epsilon chains, while a peripheral stalk is formed by the delta and b chains.

It localises to the cell membrane. F(1)F(0) ATP synthase produces ATP from ADP in the presence of a proton or sodium gradient. F-type ATPases consist of two structural domains, F(1) containing the extramembraneous catalytic core and F(0) containing the membrane proton channel, linked together by a central stalk and a peripheral stalk. During catalysis, ATP synthesis in the catalytic domain of F(1) is coupled via a rotary mechanism of the central stalk subunits to proton translocation. Its function is as follows. Component of the F(0) channel, it forms part of the peripheral stalk, linking F(1) to F(0). This chain is ATP synthase subunit b, found in Streptococcus suis (strain 98HAH33).